Consider the following 257-residue polypeptide: Imidazole glycerol phosphate synthase subunit HisF (257 aa).

Active-site residues include D11 and D130.

This sequence belongs to the HisA/HisF family. In terms of assembly, heterodimer of HisH and HisF.

It is found in the cytoplasm. The catalysed reaction is 5-[(5-phospho-1-deoxy-D-ribulos-1-ylimino)methylamino]-1-(5-phospho-beta-D-ribosyl)imidazole-4-carboxamide + L-glutamine = D-erythro-1-(imidazol-4-yl)glycerol 3-phosphate + 5-amino-1-(5-phospho-beta-D-ribosyl)imidazole-4-carboxamide + L-glutamate + H(+). Its pathway is amino-acid biosynthesis; L-histidine biosynthesis; L-histidine from 5-phospho-alpha-D-ribose 1-diphosphate: step 5/9. Its function is as follows. IGPS catalyzes the conversion of PRFAR and glutamine to IGP, AICAR and glutamate. The HisF subunit catalyzes the cyclization activity that produces IGP and AICAR from PRFAR using the ammonia provided by the HisH subunit. This chain is Imidazole glycerol phosphate synthase subunit HisF, found in Shewanella sediminis (strain HAW-EB3).